Reading from the N-terminus, the 1665-residue chain is Cortactin-binding protein 2 (1665 aa).

Disordered stretches follow at residues 1 to 23 (MATD…AGAT), 201 to 235 (EEKK…SEFD), 360 to 441 (ASHG…LHPG), 455 to 480 (GNAN…PTSR), and 499 to 617 (RFTS…PKPS). Residues 120–276 (KMQERMSTQL…EQLKRGNDNK (157 aa)) are a coiled coil. A compositionally biased stretch (polar residues) spans 385 to 395 (GPSTGSTADLT). Residue Arg499 is modified to Asymmetric dimethylarginine. The segment covering 584 to 594 (TVASPPSSLPQ) has biased composition (polar residues). ANK repeat units lie at residues 710 to 740 (GRPT…DINY), 744 to 773 (DGHS…QVDA), 777 to 806 (NGFT…NINH), 810 to 839 (GGQT…DRSI), 843 to 872 (DGWT…PAHG), and 914 to 944 (EGWT…EPER). The tract at residues 1447–1484 (CSKKKGESGAWRKVSTSPRKKSSRFSSPTWNKPDLSEE) is disordered. Position 1526 is a phosphoserine (Ser1526). Residues 1544–1562 (SESDISKIADSRDDLRRFD) are compositionally biased toward basic and acidic residues. Residues 1544–1648 (SESDISKIAD…RQIEINNNSK (105 aa)) are disordered. Polar residues-rich tracts occupy residues 1564 to 1576 (PGNN…TVNN) and 1584 to 1604 (KEVS…QSKT). Over residues 1626-1640 (SQNTKRSSSSSNTRQ) the composition is skewed to low complexity.

As to quaternary structure, interacts with CTTN/cortactin SH3 domain. Interacts with STRN, STRN4/zinedin and MOB4/phocein; this interactions mediate the association with the STRIPAK core complex and may regulate dendritic spine distribution of the STRIPAK complex in hippocampal neurons. Activation of glutamate receptors weakens the interaction with STRN and STRN4.

The protein localises to the cytoplasm. Its subcellular location is the cell cortex. It localises to the cell projection. The protein resides in the dendritic spine. Functionally, regulates the dendritic spine distribution of CTTN/cortactin in hippocampal neurons, and thus controls dendritic spinogenesis and dendritic spine maintenance. Associates with the striatin-interacting phosphatase and kinase (STRIPAK) core complex to regulate dendritic spine distribution of the STRIPAK complex in hippocampal neurons. This Equus caballus (Horse) protein is Cortactin-binding protein 2 (CTTNBP2).